The following is a 470-amino-acid chain: Poly(A) polymerase catalytic subunit (470 aa).

Residues Asp192 and Asp194 contribute to the active site.

This sequence belongs to the poxviridae poly(A) polymerase catalytic subunit family. As to quaternary structure, heterodimer of a large (catalytic) subunit and a small (regulatory) subunit.

The catalysed reaction is RNA(n) + ATP = RNA(n)-3'-adenine ribonucleotide + diphosphate. Polymerase that creates the 3'-poly(A) tail of mRNA's. The chain is Poly(A) polymerase catalytic subunit (PAPL) from Deerpox virus (strain Mule deer/United States/W-848-83/1983) (DPV).